A 655-amino-acid chain; its full sequence is Fructose-1,6-bisphosphatase class 3 (655 aa).

Belongs to the FBPase class 3 family. It depends on Mn(2+) as a cofactor.

The enzyme catalyses beta-D-fructose 1,6-bisphosphate + H2O = beta-D-fructose 6-phosphate + phosphate. It participates in carbohydrate biosynthesis; gluconeogenesis. The chain is Fructose-1,6-bisphosphatase class 3 from Porphyromonas gingivalis (strain ATCC BAA-308 / W83).